The following is a 320-amino-acid chain: GTP 3',8-cyclase (320 aa).

The 221-residue stretch at 5–225 folds into the Radical SAM core domain; it reads QFGRKINYLR…IQLIKKDEKA (221 aa). GTP is bound at residue Arg-14. Residues Cys-21 and Cys-25 each coordinate [4Fe-4S] cluster. Tyr-27 is an S-adenosyl-L-methionine binding site. [4Fe-4S] cluster is bound at residue Cys-28. Arg-64 serves as a coordination point for GTP. Gly-68 lines the S-adenosyl-L-methionine pocket. Residue Thr-95 participates in GTP binding. Ser-119 lines the S-adenosyl-L-methionine pocket. Lys-155 lines the GTP pocket. S-adenosyl-L-methionine is bound at residue Met-189. [4Fe-4S] cluster is bound by residues Cys-248 and Cys-251. 253-255 is a binding site for GTP; the sequence is RIR. Residue Cys-265 participates in [4Fe-4S] cluster binding.

Belongs to the radical SAM superfamily. MoaA family. In terms of assembly, monomer and homodimer. [4Fe-4S] cluster is required as a cofactor.

The enzyme catalyses GTP + AH2 + S-adenosyl-L-methionine = (8S)-3',8-cyclo-7,8-dihydroguanosine 5'-triphosphate + 5'-deoxyadenosine + L-methionine + A + H(+). Its pathway is cofactor biosynthesis; molybdopterin biosynthesis. Functionally, catalyzes the cyclization of GTP to (8S)-3',8-cyclo-7,8-dihydroguanosine 5'-triphosphate. The protein is GTP 3',8-cyclase of Campylobacter jejuni subsp. jejuni serotype O:6 (strain 81116 / NCTC 11828).